The chain runs to 89 residues: Large ribosomal subunit protein uL23cz/uL23cy (89 aa).

This sequence belongs to the universal ribosomal protein uL23 family. Part of the 50S ribosomal subunit.

It is found in the plastid. Its subcellular location is the chloroplast. Binds to 23S rRNA. This Calycanthus floridus var. glaucus (Eastern sweetshrub) protein is Large ribosomal subunit protein uL23cz/uL23cy (rpl23-A).